The sequence spans 855 residues: Nuclear valosin-containing protein-like (855 aa).

Residues 1–219 (MKPRPGVFVD…SLLESDKKRK (219 aa)) are interaction with RPL5. The Nucleolar localization signal signature appears at 49 to 52 (RRKR). Residue lysine 70 is modified to N6-acetyllysine. The interval 83–234 (LAKRARQDEE…KGNKRKTENL (152 aa)) is disordered. A Nuclear localization signal motif is present at residues 85–88 (KRAR). Residues 90–110 (DEEDEYTESYSDDDSNMEDYP) are compositionally biased toward acidic residues. Polar residues-rich tracts occupy residues 113 to 123 (QSANPMNSSLL) and 131 to 157 (SESV…SKTG). Serine 133 carries the post-translational modification Phosphoserine. Threonine 137 is modified (phosphothreonine). Lysine 155 carries the N6-acetyllysine modification. At serine 190 the chain carries Phosphoserine. Residue lysine 207 forms a Glycyl lysine isopeptide (Lys-Gly) (interchain with G-Cter in SUMO2) linkage. Serine 210 and serine 214 each carry phosphoserine. The segment covering 217 to 228 (KRKGRAKGKGNK) has biased composition (basic residues). A Nuclear localization signal motif is present at residues 217–231 (KRKGRAKGKGNKRKT). An interaction with WDR74 region spans residues 266–473 (VGGNDATLKE…LTPGFVGADL (208 aa)). Residue 304–311 (GPPGCGKT) participates in ATP binding. Positions 496-523 (QKKKPEIEGLPSEGDQEERLGAEPTSET) are disordered. 621-628 (GPPGCGKT) serves as a coordination point for ATP.

Belongs to the AAA ATPase family. Interacts with NCL/nucleolin. Isoform 1 and isoform 2 interact with TERT and isoform 1 exhibits a higher binding affinity for TERT compared to isoform 2. Isoform 1 interacts with MTREX in an ATP-dependent manner; the interaction is required to associate NVL with nuclear RNA exosome. Isoform 1 interacts with RPL5 in an ATP-dependent manner. Interacts with WDR74 (through WDR repeats); the interaction is independent of RNA or pre-60S ribosome particles.

Its subcellular location is the nucleus. The protein resides in the nucleolus. The protein localises to the nucleoplasm. Functionally, participates in the assembly of the telomerase holoenzyme and effecting of telomerase activity via its interaction with TERT. Involved in both early and late stages of the pre-rRNA processing pathways. Spatiotemporally regulates 60S ribosomal subunit biogenesis in the nucleolus. Catalyzes the release of specific assembly factors, such as WDR74, from pre-60S ribosomal particles through the ATPase activity. This chain is Nuclear valosin-containing protein-like, found in Mus musculus (Mouse).